Consider the following 60-residue polypeptide: Stress response protein YkoL (60 aa).

The protein is Stress response protein YkoL (ykoL) of Bacillus subtilis (strain 168).